The chain runs to 165 residues: Group 10 secretory phospholipase A2 (165 aa).

A signal peptide spans methionine 1 to glycine 31. Residues glutamate 32–arginine 42 constitute a propeptide that is removed on maturation. 8 cysteine pairs are disulfide-bonded: cysteine 53-cysteine 111, cysteine 67-cysteine 157, cysteine 69-cysteine 85, cysteine 84-cysteine 139, cysteine 90-cysteine 164, cysteine 91-cysteine 132, cysteine 100-cysteine 125, and cysteine 118-cysteine 130. The Ca(2+) site is built by phenylalanine 68, glycine 70, and glycine 72. Residue histidine 88 is part of the active site. Ca(2+) is bound at residue aspartate 89. A glycan (N-linked (GlcNAc...) asparagine) is linked at asparagine 113. Aspartate 133 is a catalytic residue.

Belongs to the phospholipase A2 family. In terms of assembly, interacts with PLA2R1; this interaction mediates PLA2G10 clearance and inactivation. It depends on Ca(2+) as a cofactor. As to expression, found in spleen, thymus, peripheral blood leukocytes, pancreas, lung, and colon. Expressed in neuronal fibers in dorsal root ganglia and in peripheral tissues including stomach, white adipose tissue and prostate (at protein level).

The protein localises to the secreted. Its subcellular location is the lysosome. The protein resides in the cytoplasmic vesicle. It localises to the secretory vesicle. It is found in the acrosome. The enzyme catalyses a 1,2-diacyl-sn-glycero-3-phosphocholine + H2O = a 1-acyl-sn-glycero-3-phosphocholine + a fatty acid + H(+). It catalyses the reaction 1-hexadecanoyl-2-(9Z-octadecenoyl)-sn-glycero-3-phosphocholine + H2O = 1-hexadecanoyl-sn-glycero-3-phosphocholine + (9Z)-octadecenoate + H(+). It carries out the reaction 1-octadecanoyl-2-(5Z,8Z,11Z,14Z-eicosatetraenoyl)-sn-glycero-3-phosphocholine + H2O = 1-octadecanoyl-sn-glycero-3-phosphocholine + (5Z,8Z,11Z,14Z)-eicosatetraenoate + H(+). The catalysed reaction is 1,2-dihexadecanoyl-sn-glycero-3-phosphocholine + H2O = 1-hexadecanoyl-sn-glycero-3-phosphocholine + hexadecanoate + H(+). The enzyme catalyses 1-hexadecanoyl-2-(9Z-octadecenoyl)-sn-glycero-3-phosphoglycerol + H2O = 1-hexadecanoyl-sn-glycero-3-phosphoglycerol + (9Z)-octadecenoate + H(+). It catalyses the reaction 1,2-dihexadecanoyl-sn-glycero-3-phospho-(1'-sn-glycerol) + H2O = 1-hexadecanoyl-sn-glycero-3-phospho-(1'-sn-glycerol) + hexadecanoate + H(+). It carries out the reaction 1-hexadecanoyl-2-(9Z-octadecenoyl)-sn-glycero-3-phospho-L-serine + H2O = 1-hexadecanoyl-sn-glycero-3-phospho-L-serine + (9Z)-octadecenoate + H(+). The catalysed reaction is 1-hexadecanoyl-2-(9Z,12Z-octadecadienoyl)-sn-glycero-3-phosphoethanolamine + H2O = 1-hexadecanoyl-sn-glycero-3-phosphoethanolamine + (9Z,12Z)-octadecadienoate + H(+). The enzyme catalyses 1-hexadecanoyl-2-(9Z-octadecenoyl)-sn-glycero-3-phosphate + H2O = 1-hexadecanoyl-sn-glycero-3-phosphate + (9Z)-octadecenoate + H(+). It catalyses the reaction 1-O-hexadecyl-2-acetyl-sn-glycero-3-phosphocholine + H2O = 1-O-hexadecyl-sn-glycero-3-phosphocholine + acetate + H(+). With respect to regulation, inhibited by methyl indoxam. Its function is as follows. Secretory calcium-dependent phospholipase A2 that primarily targets extracellular phospholipids. Hydrolyzes the ester bond of the fatty acyl group attached at sn-2 position of phospholipids with preference for phosphatidylcholines and phosphatidylglycerols over phosphatidylethanolamines. Preferentially releases sn-2 omega-6 and omega-3 polyunsaturated fatty acyl (PUFA) chains over saturated fatty acyls. Contributes to phospholipid remodeling of very low-density lipoprotein (VLDL), low-density lipoprotein (LDL) and high-density lipoprotein (HDL) particles. Hydrolyzes LDL phospholipids releasing unsaturated fatty acids that regulate macrophage differentiation toward foam cells. Efficiently hydrolyzes and inactivates platelet activating factor (PAF), a potent lipid mediator present in oxidized LDL. May act in an autocrine and paracrine manner. Secreted by lung epithelium, targets membrane phospholipids of infiltrating eosinophils, releasing arachidonate and boosting eicosanoid and cysteinyl leukotriene synthesis involved in airway inflammatory response. Secreted by gut epithelium, hydrolyzes dietary and biliary phosphatidylcholines in the gastrointestinal lumen. Plays a stem cell regulator role in colon epithelium. Within intracellular compartment, mediates Paneth-like cell differentiation and its stem cell supporting functions by inhibiting the Wnt signaling pathway in intestinal stem cell (ISC). Secreted in the intestinal lumen upon inflammation, acts in an autocrine way and promotes prostaglandin E2 synthesis that stimulates Wnt signaling pathway in ISCs and tissue regeneration. May participate in hair follicle morphogenesis by regulating phosphatidylethanolamines metabolism at the outermost epithelial layer and facilitating melanin synthesis. By releasing lysophosphatidylcholines (LPCs) at sperm acrosome, controls sperm cell capacitation, acrosome reaction and overall fertility. May promote neurite outgrowth in neuron fibers involved in nociception. Contributes to lipid remodeling of cellular membranes and generation of lipid mediators involved in pathogen clearance. Cleaves sn-2 fatty acyl chains of phosphatidylglycerols and phosphatidylethanolamines, which are major components of membrane phospholipids in bacteria. Displays bactericidal activity against Gram-positive bacteria by directly hydrolyzing phospholipids of the bacterial membrane. In pulmonary epithelium, may contribute to host defense response against adenoviral infection. Prevents adenovirus entry into host cells by hydrolyzing host cell plasma membrane, releasing C16:0 LPCs that inhibit virus-mediated membrane fusion and viral infection. Likely prevents adenoviral entry into the endosomes of host cells. May play a role in maturation and activation of innate immune cells including macrophages, group 2 innate lymphoid cells and mast cells. The sequence is that of Group 10 secretory phospholipase A2 (PLA2G10) from Homo sapiens (Human).